Reading from the N-terminus, the 226-residue chain is Endonuclease V (226 aa).

Mg(2+)-binding residues include D43 and D108.

It belongs to the endonuclease V family. The cofactor is Mg(2+).

The protein resides in the cytoplasm. It carries out the reaction Endonucleolytic cleavage at apurinic or apyrimidinic sites to products with a 5'-phosphate.. Its function is as follows. DNA repair enzyme involved in the repair of deaminated bases. Selectively cleaves double-stranded DNA at the second phosphodiester bond 3' to a deoxyinosine leaving behind the intact lesion on the nicked DNA. The protein is Endonuclease V of Thermosipho melanesiensis (strain DSM 12029 / CIP 104789 / BI429).